The primary structure comprises 252 residues: Probable transcriptional regulatory protein RT0442 (252 aa).

The tract at residues 1–22 is disordered; it reads MSGHSKFKNIQHRKGAQDKKKS.

It belongs to the TACO1 family.

It localises to the cytoplasm. The protein is Probable transcriptional regulatory protein RT0442 of Rickettsia typhi (strain ATCC VR-144 / Wilmington).